Reading from the N-terminus, the 284-residue chain is NAD(P)H-hydrate epimerase (284 aa).

A mitochondrion-targeting transit peptide spans 1–55 (MSGLRTLLGLGLLVSSSRFPRVVARGGPRCPGPAWWAARPMHLGDSTMAGGTVKY). In terms of domain architecture, YjeF N-terminal spans 61–271 (AQAVDEELFN…DLEKKYQLNL (211 aa)). Residue 115–119 (NNGGD) participates in (6S)-NADPHX binding. A K(+)-binding site is contributed by asparagine 116. N6-succinyllysine is present on lysine 140. Aspartate 181 serves as a coordination point for K(+). (6S)-NADPHX contacts are provided by residues 185-191 (GFSFKGA) and aspartate 214. K(+) is bound at residue serine 217.

This sequence belongs to the NnrE/AIBP family. In terms of assembly, homodimer. Interacts with APOA1 and APOA2. K(+) is required as a cofactor. In terms of processing, undergoes physiological phosphorylation during sperm capacitation, downstream to PKA activation.

It localises to the mitochondrion. It is found in the secreted. The catalysed reaction is (6R)-NADHX = (6S)-NADHX. It carries out the reaction (6R)-NADPHX = (6S)-NADPHX. Its function is as follows. Catalyzes the epimerization of the S- and R-forms of NAD(P)HX, a damaged form of NAD(P)H that is a result of enzymatic or heat-dependent hydration. This is a prerequisite for the S-specific NAD(P)H-hydrate dehydratase to allow the repair of both epimers of NAD(P)HX. Accelerates cholesterol efflux from endothelial cells to high-density lipoprotein (HDL) and thereby regulates angiogenesis. In Monodelphis domestica (Gray short-tailed opossum), this protein is NAD(P)H-hydrate epimerase.